The chain runs to 136 residues: Calcitonin (136 aa).

A signal peptide spans 1-25; the sequence is MGFLKFSPFLVVSILLLYQACGLQA. Positions 26-82 are excised as a propeptide; the sequence is VPLRSTLESSPGMATLSEEEARLLAALVQNYMQMKVRELEQEEEQEAEGSSLDSPRS. Ser-42 bears the Phosphoserine mark. The tract at residues 64 to 84 is disordered; that stretch reads LEQEEEQEAEGSSLDSPRSKR. An intrachain disulfide couples Cys-85 to Cys-91. Asn-87 carries an N-linked (GlcNAc...) asparagine glycan. The disordered stretch occupies residues 114 to 136; the sequence is GAPGKKRDMAKDLETNHHPYFGN. Pro-116 bears the Proline amide mark. The segment covering 118–130 has biased composition (basic and acidic residues); that stretch reads KKRDMAKDLETNH. Positions 121-136 are excised as a propeptide; that stretch reads DMAKDLETNHHPYFGN.

This sequence belongs to the calcitonin family.

It is found in the secreted. Its function is as follows. Calcitonin is a peptide hormone that causes a rapid but short-lived drop in the level of calcium and phosphate in blood by promoting the incorporation of those ions in the bones. Calcitonin function is mediated by the calcitonin receptor/CALCR and the CALCR-RAMP2 (AMYR2) receptor complex. The chain is Calcitonin from Rattus norvegicus (Rat).